Consider the following 743-residue polypeptide: Dystrobrevin alpha (743 aa).

Residues 1–288 (MIEDSGKRGN…SHSNQHQMKE (288 aa)) form an interaction with MAGEE1 region. The segment at 238-294 (FHPVECSYCHSESMMGFRYRCQQCHNYQLCQDCFWRGHAGGSHSNQHQMKEYTSWKS) adopts a ZZ-type zinc-finger fold. Residues cysteine 243, cysteine 246, cysteine 258, cysteine 261, cysteine 267, cysteine 270, histidine 280, and histidine 284 each contribute to the Zn(2+) site. The tract at residues 400–450 (DRLADEHVLIGLYVNMLRNNPSCMLESSNRLDEEHRLIARYAARLAAESSS) is syntrophin-binding region. Residues 461–556 (DISFTIDANK…EGLMKLLKTQ (96 aa)) adopt a coiled-coil conformation. Residues 556–575 (QGAGSPRSSPSHTISRPIPM) are disordered. Positions 557 to 569 (GAGSPRSSPSHTI) are enriched in polar residues. At serine 662 the chain carries Phosphoserine.

It belongs to the dystrophin family. Dystrobrevin subfamily. As to quaternary structure, interacts with dystrophin, utrophin and the syntrophins SNTA1, SNTB1, SNTB2, SNTG1 and SNTG2. Interacts with MAGEE1. Binds dystrobrevin binding protein 1. Interacts with CTNNAL1. The interaction is required for correct localization of both CTNNAL1 and DTNA. In terms of assembly, does not interact with dystrophin. Phosphorylation of DTN-1 on tyrosine kinase substrate domain present in the C-terminus. As to expression, highly expressed in brain, skeletal and cardiac muscles, and expressed at lower levels in lung, liver and pancreas. Isoform 2 is not expressed in cardiac muscle. Isoform 7 and isoform 8 are only expressed in muscle.

The protein localises to the cytoplasm. Its subcellular location is the synapse. It localises to the cell membrane. Functionally, may be involved in the formation and stability of synapses as well as being involved in the clustering of nicotinic acetylcholine receptors. The chain is Dystrobrevin alpha from Homo sapiens (Human).